The following is a 388-amino-acid chain: Branched-chain-amino-acid aminotransferase 2, chloroplastic (388 aa).

A chloroplast-targeting transit peptide spans M1–T22. K235 bears the N6-(pyridoxal phosphate)lysine mark.

This sequence belongs to the class-IV pyridoxal-phosphate-dependent aminotransferase family. Requires pyridoxal 5'-phosphate as cofactor.

It is found in the plastid. The protein localises to the chloroplast. It catalyses the reaction L-leucine + 2-oxoglutarate = 4-methyl-2-oxopentanoate + L-glutamate. It carries out the reaction L-isoleucine + 2-oxoglutarate = (S)-3-methyl-2-oxopentanoate + L-glutamate. The catalysed reaction is L-valine + 2-oxoglutarate = 3-methyl-2-oxobutanoate + L-glutamate. It functions in the pathway amino-acid biosynthesis; L-isoleucine biosynthesis; L-isoleucine from 2-oxobutanoate: step 4/4. Its pathway is amino-acid biosynthesis; L-leucine biosynthesis; L-leucine from 3-methyl-2-oxobutanoate: step 4/4. The protein operates within amino-acid biosynthesis; L-valine biosynthesis; L-valine from pyruvate: step 4/4. Functionally, converts 2-oxo acids to branched-chain amino acids. Shows activity with L-Leu, L-Ile and L-Val as amino donors and 2-oxoglutarate as an amino acceptor, but no activity for D-isomers of Leu, Ile, Val, Asp, Glu or Ala. This chain is Branched-chain-amino-acid aminotransferase 2, chloroplastic (BCAT2), found in Arabidopsis thaliana (Mouse-ear cress).